The following is a 499-amino-acid chain: Potassium voltage-gated channel subfamily A member 2 (499 aa).

Residues 1 to 26 form a disordered region; that stretch reads MTVATGDPADEAAALPGHPQDTYDPE. The segment at 1–125 is tetramerization domain; sequence MTVATGDPAD…YELGEEAMEM (125 aa). Residues 1 to 160 lie on the Cytoplasmic side of the membrane; it reads MTVATGDPAD…LLFEYPESSG (160 aa). Residues 161 to 182 traverse the membrane as a helical segment; that stretch reads PARIIAIVSVMVILISIVSFCL. The Extracellular segment spans residues 183–221; it reads ETLPIFRDENEDMHGSGVTFHTYSNSTIGYQQSTSFTDP. Residue Asn-207 is glycosylated (N-linked (GlcNAc...) asparagine). A helical membrane pass occupies residues 222–243; the sequence is FFIVETLCIIWFSFEFLVRFFA. The S-palmitoyl cysteine moiety is linked to residue Cys-244. Residues 244–254 lie on the Cytoplasmic side of the membrane; sequence CPSKAGFFTNI. Residues 255–275 traverse the membrane as a helical segment; that stretch reads MNIIDIVAIIPYFITLGTELA. The Extracellular portion of the chain corresponds to 276–289; that stretch reads EKPEDAQQGQQAMS. Residues 290 to 310 form a helical; Voltage-sensor membrane-spanning segment; the sequence is LAILRVIRLVRVFRIFKLSRH. At 311-325 the chain is on the cytoplasmic side; the sequence is SKGLQILGQTLKASM. The interval 312-325 is S4-S5 linker; that stretch reads KGLQILGQTLKASM. A helical transmembrane segment spans residues 326 to 347; that stretch reads RELGLLIFFLFIGVILFSSAVY. Topologically, residues 348 to 361 are extracellular; that stretch reads FAEADERESQFPSI. The segment at residues 362–373 is an intramembrane region (helical); the sequence is PDAFWWAVVSMT. The short motif at 374–379 is the Selectivity filter element; the sequence is TVGYGD. Residues 374 to 381 lie within the membrane without spanning it; that stretch reads TVGYGDMV. Topologically, residues 382–388 are extracellular; the sequence is PTTIGGK. Residues 389-417 form a helical membrane-spanning segment; sequence IVGSLCAIAGVLTIALPVPVIVSNFNYFY. The Cytoplasmic segment spans residues 418–499; sequence HRETEGEEQA…VNITKMLTDV (82 aa). Tyr-429 carries the post-translational modification Phosphotyrosine. Phosphoserine occurs at positions 434, 440, 441, and 449. Tyr-458 carries the phosphotyrosine modification. Ser-468 bears the Phosphoserine mark. The PDZ-binding signature appears at 497 to 499; that stretch reads TDV.

Belongs to the potassium channel family. A (Shaker) (TC 1.A.1.2) subfamily. Kv1.2/KCNA2 sub-subfamily. In terms of assembly, homotetramer and heterotetramer with other channel-forming alpha subunits, such as KCNA1, KCNA4, KCNA5, KCNA6 and KCNA7. Channel activity is regulated by interaction with the beta subunits, including KCNAB1 and KCNAB2. Identified in a complex with KCNA1 and KCNAB2. Identified in a complex with KCNA5 and KCNAB1. Identified in a complex with KCNA4 and FYN. Interacts with the beta subunit KCNAB1. Interacts with PTK2B. Interacts (via C-terminus) with CTTN. Interacts (via N-terminal cytoplasmic domain) with RHOA (GTP-bound form); this regulates channel activity by reducing location at the cell surface in response to CHRM1 activation. Interacts with DRD2. Interacts with SIGMAR1; cocaine consumption leads to increased interaction. Interacts with ADAM22. Interacts (via C-terminus) with the PDZ domains of DLG1, DLG2 and DLG4. Interacts with CNTNAP2. Interacts with ADAM11. Interacts with LYNX1. Phosphorylated on tyrosine residues; phosphorylation increases in response to ischemia. Phosphorylated on tyrosine residues by activated PTK2B/PYK2. Phosphorylation on tyrosine residues suppresses ion channel activity. Phosphorylated on tyrosine residues in response to CHRM1 activation; this abolishes interaction with CTTN. This is probably due to endocytosis of the phosphorylated channel subunits. Phosphorylated on serine residues in response to increased cAMP levels; phosphorylation is apparently not catalyzed by PKA. Post-translationally, N-glycosylated, with complex, sialylated N-glycans. As to expression, detected in brain cortex. Detected in peroneal nerve in the juxtaparanodal regions of the node of Ranvier; expression is decreased in patients with diabetes mellitus that suffer from axonal neuropathy. Detected in paranodal and juxtanodal zones in myelinated spinal cord (at protein level).

The protein localises to the cell membrane. It localises to the membrane. The protein resides in the cell projection. It is found in the axon. Its subcellular location is the synapse. The protein localises to the endoplasmic reticulum membrane. It localises to the lamellipodium membrane. The protein resides in the synaptosome. It is found in the presynaptic cell membrane. Its subcellular location is the dendrite. The protein localises to the cell junction. It localises to the paranodal septate junction. The catalysed reaction is K(+)(in) = K(+)(out). Inhibited by 4-aminopyridine (4-AP) and charybdotoxin (CTX), but not by tetraethylammonium (TEA). Inhibited by dendrotoxin (DTX). Inhibited by tityustoxin-K alpha (TsTX-Kalpha), a toxin that is highly specific for KCNA2. Inhibited by maurotoxin. Inhibited by kappaM conotoxins kappaM-RIIIJ and kappaM-RIIIK; kappaM-RIIIJ has much higher affinity for channels containing KCNA2 than kappaM-RIIIK, with the exception of heterodimers formed by KCNA2 and KCNA7 where the opposite is true. Its function is as follows. Voltage-gated potassium channel that mediates transmembrane potassium transport in excitable membranes, primarily in the brain and the central nervous system, but also in the cardiovascular system. Prevents aberrant action potential firing and regulates neuronal output. Forms tetrameric potassium-selective channels through which potassium ions pass in accordance with their electrochemical gradient. The channel alternates between opened and closed conformations in response to the voltage difference across the membrane. Can form functional homotetrameric channels and heterotetrameric channels that contain variable proportions of KCNA1, KCNA2, KCNA4, KCNA5, KCNA6, KCNA7, and possibly other family members as well; channel properties depend on the type of alpha subunits that are part of the channel. Channel properties are modulated by cytoplasmic beta subunits that regulate the subcellular location of the alpha subunits and promote rapid inactivation of delayed rectifier potassium channels. In vivo, membranes probably contain a mixture of heteromeric potassium channel complexes, making it difficult to assign currents observed in intact tissues to any particular potassium channel family member. Homotetrameric KCNA2 forms a delayed-rectifier potassium channel that opens in response to membrane depolarization, followed by slow spontaneous channel closure. In contrast, a heteromultimer formed by KCNA2 and KCNA4 shows rapid inactivation. Regulates neuronal excitability and plays a role as pacemaker in the regulation of neuronal action potentials. KCNA2-containing channels play a presynaptic role and prevent hyperexcitability and aberrant action potential firing. Response to toxins that are selective for KCNA2-containing potassium channels suggests that in Purkinje cells, dendritic subthreshold KCNA2-containing potassium channels prevent random spontaneous calcium spikes, suppressing dendritic hyperexcitability without hindering the generation of somatic action potentials, and thereby play an important role in motor coordination. Plays a role in the induction of long-term potentiation of neuron excitability in the CA3 layer of the hippocampus. May function as down-stream effector for G protein-coupled receptors and inhibit GABAergic inputs to basolateral amygdala neurons. May contribute to the regulation of neurotransmitter release, such as gamma-aminobutyric acid (GABA). Contributes to the regulation of the axonal release of the neurotransmitter dopamine. Reduced KCNA2 expression plays a role in the perception of neuropathic pain after peripheral nerve injury, but not acute pain. Plays a role in the regulation of the time spent in non-rapid eye movement (NREM) sleep. The sequence is that of Potassium voltage-gated channel subfamily A member 2 (KCNA2) from Homo sapiens (Human).